The following is a 62-amino-acid chain: Sperm histone P2a (62 aa).

Belongs to the protamine P2 family. In terms of processing, proteolytic processing into mature chains is required for histone eviction during spermatogenesis. Transition proteins (TNP1 and TNP2) are required for processing. In terms of tissue distribution, testis.

The protein resides in the nucleus. It is found in the chromosome. Protamines substitute for histones in the chromatin of sperm during the haploid phase of spermatogenesis. They compact sperm DNA into a highly condensed, stable and inactive complex. In Equus caballus (Horse), this protein is Sperm histone P2a.